A 201-amino-acid chain; its full sequence is Natural cytotoxicity triggering receptor 3 (201 aa).

Residues Met-1–Ala-18 form the signal peptide. The Ig-like domain maps to Leu-19–Val-126. Residues Leu-19–Gln-133 are Extracellular-facing. A disulfide bridge connects residues Cys-39 and Cys-108. N-linked (GlcNAc...) asparagine glycans are attached at residues Asn-42 and Asn-121. Residues Leu-134–Val-154 traverse the membrane as a helical segment. Residues Ala-155–Gly-201 are Cytoplasmic-facing.

The protein belongs to the natural cytotoxicity receptor (NCR) family. Homodimer in the unliganted form. Interacts with CD3Z. Interacts with and is activated by binding to NCR3LG1. Interacts with and is activated by binding to BAG6. Interacts with and is inhibited by binding to LGALS3.

It is found in the cell membrane. Functionally, cell membrane receptor of natural killer/NK cells that is activated by binding of extracellular ligands including BAG6 and NCR3LG1. Stimulates NK cells cytotoxicity toward neighboring cells producing these ligands. It controls, for instance, NK cells cytotoxicity against tumor cells. Engagement of NCR3 by BAG6 also promotes myeloid dendritic cells (DC) maturation, both through killing DCs that did not acquire a mature phenotype, and inducing the release by NK cells of TNFA and IFNG that promote DC maturation. The sequence is that of Natural cytotoxicity triggering receptor 3 (NCR3) from Macaca mulatta (Rhesus macaque).